The following is a 394-amino-acid chain: MKQLKPNSKYLLYGQALSFMGDYCVLPALLILSTYYHDYWVTSGVIVVRSIPMVFQPFLGVLVDRLDRIKIMLWTDIIRGIIFLGLTFLPKGEYPLIFLALLFITYGSGVFFNPARLAVMSSLESDIKSINTLFAKATTISIIVGAAAGGLFLLGGSVELAVAFNGVTYLVSAFFISRIKLQFVPIQSENIKEAFQSFKEGLKEIKTNSFVLNAMFTMITMALLWGVVYSYFPIVSRFLGDGEIGNFILTFCIGFGGFIGAALVSKWGFNNNRGLTYFTVLSIVSLALFLFTPIFAVSVIAAILFFIAMEYGEVLAKVKVQENAANQIQGRIFSVAEASIGLCISIGSMFINILSAPVIMGLIVVIVCGLFLHTKLVNKSFLERDNKTEQKGVF.

11 helical membrane passes run 11 to 31, 43 to 63, 69 to 89, 92 to 112, 142 to 162, 166 to 186, 215 to 235, 244 to 264, 288 to 308, 332 to 352, and 353 to 373; these read LLYG…ALLI, SGVI…GVLV, IKIM…LTFL, GEYP…GVFF, IIVG…ELAV, GVTY…FVPI, MFTM…FPIV, IGNF…AALV, LFLF…FFIA, IFSV…MFIN, and ILSA…LFLH.

The protein belongs to the major facilitator superfamily. Drug:H(+) antiporter-3 (DHA3) (TC 2.A.1.21) family.

The protein localises to the cell membrane. Part of the bacilysin biosynthesis operon. May be involved in self-resistance to bacilysin by permitting efflux of this antibiotic. This chain is Putative bacilysin exporter BacE (bacE), found in Bacillus subtilis (strain 168).